Reading from the N-terminus, the 500-residue chain is MLKRKKVKPITLRDVTIIDDGKLRKAITAASLGNAMEWFDFGVYGFVAYALGKVFFPGADPSVQMVAALATFSVPFLIRPLGGLFFGMLGDKYGRQKILAITIVIMSISTFCIGLIPSYDTIGIWAPILLLICKMAQGFSVGGEYTGASIFVAEYSPDRKRGFMGSWLDFGSIAGFVLGAGVVVLISTIVGEANFLDWGWRIPFFIALPLGIIGLYLRHALEETPAFQQHVDKLEQGDREGLQDGPKVSFKEIATKYWRSLLTCIGLVIATNVTYYMLLTYMPSYLSHNLHYSEDHGVLIIIAIMIGMLFVQPVMGLLSDRFGRRPFVLLGSVALFVLAIPAFILINSNVIGLIFAGLLMLAVILNCFTGVMASTLPAMFPTHIRYSALAAAFNISVLVAGLTPTLAAWLVESSQNLMMPAYYLMVVAVVGLITGVTMKETANRPLKGATPAASDIQEAKEILVEHYDNIEQKIDDIDHEIADLQAKRTRLVQQHPRIDE.

Topologically, residues 1-37 are cytoplasmic; sequence MLKRKKVKPITLRDVTIIDDGKLRKAITAASLGNAME. Residues 38-58 traverse the membrane as a helical segment; it reads WFDFGVYGFVAYALGKVFFPG. Residues 59–65 are Periplasmic-facing; it reads ADPSVQM. Residues 66–86 traverse the membrane as a helical segment; that stretch reads VAALATFSVPFLIRPLGGLFF. The Cytoplasmic portion of the chain corresponds to 87–97; sequence GMLGDKYGRQK. The chain crosses the membrane as a helical span at residues 98-118; it reads ILAITIVIMSISTFCIGLIPS. Residues 119 to 121 lie on the Periplasmic side of the membrane; sequence YDT. The helical transmembrane segment at 122–142 threads the bilayer; the sequence is IGIWAPILLLICKMAQGFSVG. The Cytoplasmic segment spans residues 143–169; it reads GEYTGASIFVAEYSPDRKRGFMGSWLD. A helical transmembrane segment spans residues 170–190; sequence FGSIAGFVLGAGVVVLISTIV. At 191–194 the chain is on the periplasmic side; sequence GEAN. A helical membrane pass occupies residues 195–215; the sequence is FLDWGWRIPFFIALPLGIIGL. Residues 216–260 are Cytoplasmic-facing; that stretch reads YLRHALEETPAFQQHVDKLEQGDREGLQDGPKVSFKEIATKYWRS. Residues 261 to 281 traverse the membrane as a helical segment; it reads LLTCIGLVIATNVTYYMLLTY. Residues 282–297 lie on the Periplasmic side of the membrane; the sequence is MPSYLSHNLHYSEDHG. Residues 298-318 form a helical membrane-spanning segment; that stretch reads VLIIIAIMIGMLFVQPVMGLL. At 319–325 the chain is on the cytoplasmic side; sequence SDRFGRR. A helical membrane pass occupies residues 326-346; that stretch reads PFVLLGSVALFVLAIPAFILI. At 347-350 the chain is on the periplasmic side; sequence NSNV. Residues 351–371 form a helical membrane-spanning segment; that stretch reads IGLIFAGLLMLAVILNCFTGV. Over 372 to 390 the chain is Cytoplasmic; sequence MASTLPAMFPTHIRYSALA. The chain crosses the membrane as a helical span at residues 391-411; that stretch reads AAFNISVLVAGLTPTLAAWLV. At 412-416 the chain is on the periplasmic side; it reads ESSQN. A helical membrane pass occupies residues 417–437; the sequence is LMMPAYYLMVVAVVGLITGVT. Residues 438 to 500 lie on the Cytoplasmic side of the membrane; it reads MKETANRPLK…LVQQHPRIDE (63 aa). Residues 453-498 are a coiled coil; that stretch reads ASDIQEAKEILVEHYDNIEQKIDDIDHEIADLQAKRTRLVQQHPRI.

This sequence belongs to the major facilitator superfamily. Metabolite:H+ Symporter (MHS) family (TC 2.A.1.6) family.

It is found in the cell inner membrane. Proton symporter that senses osmotic shifts and responds by importing osmolytes such as proline, glycine betaine, stachydrine, pipecolic acid, ectoine and taurine. It is both an osmosensor and an osmoregulator which is available to participate early in the bacterial osmoregulatory response. In Escherichia coli O157:H7, this protein is Proline/betaine transporter (proP).